The following is a 306-amino-acid chain: Probable arylamine N-acetyltransferase 3 (306 aa).

Residue Cys75 is the Acyl-thioester intermediate of the active site. Residues His115 and Asp130 contribute to the active site.

Belongs to the arylamine N-acetyltransferase family.

It carries out the reaction an arylamine + acetyl-CoA = an N-acetylarylamine + CoA. This Dictyostelium discoideum (Social amoeba) protein is Probable arylamine N-acetyltransferase 3.